The chain runs to 1353 residues: ABC-type transporter MYCGRDRAFT_41235 (1353 aa).

Residues 40–60 (ASASLWNWFFFSWLNPLIAIG) traverse the membrane as a helical segment. Residue Asn121 is glycosylated (N-linked (GlcNAc...) asparagine). Transmembrane regions (helical) follow at residues 124–144 (VLVW…ATIT), 172–192 (IGQG…GVMA), 250–270 (FACG…ICLG), 271–291 (LTIA…AILV), 364–384 (VALS…TYAA), and 397–417 (ALTL…AFGA). An ABC transmembrane type-1 1 domain is found at 129–420 (WVGGAMKLFA…LPVAFGAAAD (292 aa)). Residues 460–684 (YRVQDHSDEK…EGGQMRRVVE (225 aa)) form the ABC transporter 1 domain. Asn481 carries an N-linked (GlcNAc...) asparagine glycan. 496-503 (GPVGAGKS) lines the ATP pocket. Residues 687-720 (ASKSSAEEEEVEDGDLKDGVPSTDGGDASQTTSN) are disordered. The next 6 helical transmembrane spans lie at 748 to 768 (PAFT…GSIL), 796 to 816 (LGVS…FFIF), 864 to 882 (AFRM…VVLI), 888 to 907 (WFLL…GMYY), 973 to 993 (LSVR…LIVV), and 1002 to 1022 (AQGG…GFMI). Residues 756–1030 (ILSMLIFQGG…MIRQSAEIEN (275 aa)) form the ABC transmembrane type-1 2 domain. An ABC transporter 2 domain is found at 1070–1334 (IEMRDVVFTH…EGGHFRSLCS (265 aa)). 1104–1111 (GRTGSGKS) is an ATP binding site. Residues 1191-1200 (QSSAETLTSS) are compositionally biased toward polar residues. Residues 1191-1223 (QSSAETLTSSDQEKSSPDDAAISPSSHSHSQHL) are disordered. Residues 1208–1218 (DDAAISPSSHS) show a composition bias toward low complexity.

The protein belongs to the ABC transporter superfamily. ABCC family. Conjugate transporter (TC 3.A.1.208) subfamily.

The protein localises to the cell membrane. Its function is as follows. Multidrug resistance protein; part of the gene cluster 14 that mediates the biosynthesis of a ferrichrome A-like siderophors which may contribute to organismal virulence. In Zymoseptoria tritici (strain CBS 115943 / IPO323) (Speckled leaf blotch fungus), this protein is ABC-type transporter MYCGRDRAFT_41235.